Here is a 304-residue protein sequence, read N- to C-terminus: tRNA dimethylallyltransferase (304 aa).

Gly-13–Thr-20 is a binding site for ATP. Thr-15–Thr-20 lines the substrate pocket. An interaction with substrate tRNA region spans residues Asp-38–Gln-41.

Belongs to the IPP transferase family. Monomer. It depends on Mg(2+) as a cofactor.

It catalyses the reaction adenosine(37) in tRNA + dimethylallyl diphosphate = N(6)-dimethylallyladenosine(37) in tRNA + diphosphate. Its function is as follows. Catalyzes the transfer of a dimethylallyl group onto the adenine at position 37 in tRNAs that read codons beginning with uridine, leading to the formation of N6-(dimethylallyl)adenosine (i(6)A). In Cytophaga hutchinsonii (strain ATCC 33406 / DSM 1761 / CIP 103989 / NBRC 15051 / NCIMB 9469 / D465), this protein is tRNA dimethylallyltransferase.